The following is a 73-amino-acid chain: Conotoxin Cl14.8 (73 aa).

The first 19 residues, 1 to 19 (MKLSVTFIALMLTMTLTQG), serve as a signal peptide directing secretion. Positions 20-47 (FVLQAIDGRDNSGLDDLSEADSMEHQLQ) are excised as a propeptide.

It belongs to the conotoxin L superfamily. Contains 2 disulfide bonds. Expressed by the venom duct.

It is found in the secreted. The protein is Conotoxin Cl14.8 of Californiconus californicus (California cone).